The following is a 474-amino-acid chain: Glutamate--tRNA ligase (474 aa).

The 'HIGH' region signature appears at 9-19; it reads PSPTGYLHVGG. A 'KMSKS' region motif is present at residues 240 to 244; that stretch reads KLSKR. Residue Lys243 participates in ATP binding.

This sequence belongs to the class-I aminoacyl-tRNA synthetase family. Glutamate--tRNA ligase type 1 subfamily. As to quaternary structure, monomer.

The protein localises to the cytoplasm. It carries out the reaction tRNA(Glu) + L-glutamate + ATP = L-glutamyl-tRNA(Glu) + AMP + diphosphate. Catalyzes the attachment of glutamate to tRNA(Glu) in a two-step reaction: glutamate is first activated by ATP to form Glu-AMP and then transferred to the acceptor end of tRNA(Glu). This Aliivibrio fischeri (strain ATCC 700601 / ES114) (Vibrio fischeri) protein is Glutamate--tRNA ligase.